We begin with the raw amino-acid sequence, 430 residues long: Adenylosuccinate synthetase (430 aa).

GTP is bound by residues 13-19 (GDEGKGK) and 41-43 (GHT). D14 acts as the Proton acceptor in catalysis. Residues D14 and G41 each contribute to the Mg(2+) site. Residues 14–17 (DEGK), 39–42 (NAGH), T130, R144, Q225, T240, and R304 each bind IMP. H42 acts as the Proton donor in catalysis. Position 300-306 (300-306 (ASTGRPR)) interacts with substrate. GTP contacts are provided by residues R306, 332-334 (KLD), and 414-416 (STG).

The protein belongs to the adenylosuccinate synthetase family. In terms of assembly, homodimer. Mg(2+) serves as cofactor.

It localises to the cytoplasm. It catalyses the reaction IMP + L-aspartate + GTP = N(6)-(1,2-dicarboxyethyl)-AMP + GDP + phosphate + 2 H(+). The protein operates within purine metabolism; AMP biosynthesis via de novo pathway; AMP from IMP: step 1/2. Functionally, plays an important role in the de novo pathway of purine nucleotide biosynthesis. Catalyzes the first committed step in the biosynthesis of AMP from IMP. This Xylella fastidiosa (strain M23) protein is Adenylosuccinate synthetase.